A 99-amino-acid polypeptide reads, in one-letter code: MFEQGLILSAYLLCVGFFGLITSRNMVRALMSLELIFNAITLNFITLSNLFDNRETGEIFTLFVIAVAAAEAATGLAIALSIHRNRRSTRIDQSNLLKW.

3 consecutive transmembrane segments (helical) span residues 1-21 (MFEQ…FGLI), 31-51 (MSLE…SNLF), and 59-79 (IFTL…LAIA).

Belongs to the complex I subunit 4L family. As to quaternary structure, NDH is composed of at least 16 different subunits, 5 of which are encoded in the nucleus.

The protein resides in the plastid. It is found in the chloroplast thylakoid membrane. It carries out the reaction a plastoquinone + NADH + (n+1) H(+)(in) = a plastoquinol + NAD(+) + n H(+)(out). The catalysed reaction is a plastoquinone + NADPH + (n+1) H(+)(in) = a plastoquinol + NADP(+) + n H(+)(out). Functionally, NDH shuttles electrons from NAD(P)H:plastoquinone, via FMN and iron-sulfur (Fe-S) centers, to quinones in the photosynthetic chain and possibly in a chloroplast respiratory chain. The immediate electron acceptor for the enzyme in this species is believed to be plastoquinone. Couples the redox reaction to proton translocation, and thus conserves the redox energy in a proton gradient. The polypeptide is NAD(P)H-quinone oxidoreductase subunit 4L, chloroplastic (Adiantum capillus-veneris (Maidenhair fern)).